The primary structure comprises 294 residues: 4-hydroxy-tetrahydrodipicolinate synthase (294 aa).

Thr-44 contacts pyruvate. Catalysis depends on Tyr-132, which acts as the Proton donor/acceptor. The active-site Schiff-base intermediate with substrate is the Lys-161. A pyruvate-binding site is contributed by Ile-206.

It belongs to the DapA family. As to quaternary structure, homotetramer; dimer of dimers.

The protein localises to the cytoplasm. It catalyses the reaction L-aspartate 4-semialdehyde + pyruvate = (2S,4S)-4-hydroxy-2,3,4,5-tetrahydrodipicolinate + H2O + H(+). It participates in amino-acid biosynthesis; L-lysine biosynthesis via DAP pathway; (S)-tetrahydrodipicolinate from L-aspartate: step 3/4. In terms of biological role, catalyzes the condensation of (S)-aspartate-beta-semialdehyde [(S)-ASA] and pyruvate to 4-hydroxy-tetrahydrodipicolinate (HTPA). This is 4-hydroxy-tetrahydrodipicolinate synthase from Thermotoga petrophila (strain ATCC BAA-488 / DSM 13995 / JCM 10881 / RKU-1).